Reading from the N-terminus, the 461-residue chain is Cysteine--tRNA ligase (461 aa).

Cysteine 28 is a Zn(2+) binding site. Residues 30–40 carry the 'HIGH' region motif; that stretch reads ITVYDLCHIGH. Zn(2+) contacts are provided by cysteine 209, histidine 234, and glutamate 238. Residues 266–270 carry the 'KMSKS' region motif; the sequence is KMSKS. Lysine 269 is a binding site for ATP.

The protein belongs to the class-I aminoacyl-tRNA synthetase family. In terms of assembly, monomer. Requires Zn(2+) as cofactor.

It is found in the cytoplasm. It carries out the reaction tRNA(Cys) + L-cysteine + ATP = L-cysteinyl-tRNA(Cys) + AMP + diphosphate. This Salmonella agona (strain SL483) protein is Cysteine--tRNA ligase.